We begin with the raw amino-acid sequence, 77 residues long: uncharacterized protein (77 aa).

This is an uncharacterized protein from Plasmodium falciparum (isolate fcm17 / Senegal).